The primary structure comprises 201 residues: LexA repressor (201 aa).

A DNA-binding region (H-T-H motif) is located at residues 29-49; that stretch reads VREICKAVGLSSTSSVHFHLK. Catalysis depends on for autocatalytic cleavage activity residues S125 and K162.

This sequence belongs to the peptidase S24 family. Homodimer.

It carries out the reaction Hydrolysis of Ala-|-Gly bond in repressor LexA.. In terms of biological role, represses a number of genes involved in the response to DNA damage (SOS response), including recA and lexA. In the presence of single-stranded DNA, RecA interacts with LexA causing an autocatalytic cleavage which disrupts the DNA-binding part of LexA, leading to derepression of the SOS regulon and eventually DNA repair. The chain is LexA repressor from Clostridium botulinum (strain ATCC 19397 / Type A).